A 187-amino-acid chain; its full sequence is Ribosome-recycling factor (187 aa).

The protein belongs to the RRF family.

The protein resides in the cytoplasm. Its function is as follows. Responsible for the release of ribosomes from messenger RNA at the termination of protein biosynthesis. May increase the efficiency of translation by recycling ribosomes from one round of translation to another. In Parvibaculum lavamentivorans (strain DS-1 / DSM 13023 / NCIMB 13966), this protein is Ribosome-recycling factor.